A 288-amino-acid polypeptide reads, in one-letter code: Acetyl-coenzyme A carboxylase carboxyl transferase subunit beta (288 aa).

The CoA carboxyltransferase N-terminal domain maps to 34 to 288 (LFAKCPACKH…HLVAFHGGGQ (255 aa)). Residues C38, C41, C56, and C59 each coordinate Zn(2+). Residues 38-59 (CPACKHMIYKKDLGLAKICPTC) form a C4-type zinc finger.

Belongs to the AccD/PCCB family. As to quaternary structure, acetyl-CoA carboxylase is a heterohexamer composed of biotin carboxyl carrier protein (AccB), biotin carboxylase (AccC) and two subunits each of ACCase subunit alpha (AccA) and ACCase subunit beta (AccD). Zn(2+) is required as a cofactor.

The protein resides in the cytoplasm. The enzyme catalyses N(6)-carboxybiotinyl-L-lysyl-[protein] + acetyl-CoA = N(6)-biotinyl-L-lysyl-[protein] + malonyl-CoA. The protein operates within lipid metabolism; malonyl-CoA biosynthesis; malonyl-CoA from acetyl-CoA: step 1/1. Functionally, component of the acetyl coenzyme A carboxylase (ACC) complex. Biotin carboxylase (BC) catalyzes the carboxylation of biotin on its carrier protein (BCCP) and then the CO(2) group is transferred by the transcarboxylase to acetyl-CoA to form malonyl-CoA. This Streptococcus pyogenes serotype M28 (strain MGAS6180) protein is Acetyl-coenzyme A carboxylase carboxyl transferase subunit beta.